The sequence spans 709 residues: Glycerol kinase (709 aa).

A substrate-binding site is contributed by T56. Residue R60 participates in ATP binding. A disordered region spans residues 86 to 110 (KIGVSGLRRPSTAPARETPNAGDIK). Residues R201, Y258, and D386 each coordinate substrate. ATP is bound by residues T408, G463, and 584-588 (GMSRS).

This sequence belongs to the FGGY kinase family.

The catalysed reaction is glycerol + ATP = sn-glycerol 3-phosphate + ADP + H(+). The protein operates within polyol metabolism; glycerol degradation via glycerol kinase pathway; sn-glycerol 3-phosphate from glycerol: step 1/1. Key enzyme in the regulation of glycerol uptake and metabolism. Catalyzes the phosphorylation of glycerol to yield sn-glycerol 3-phosphate. The sequence is that of Glycerol kinase (GUT1) from Saccharomyces cerevisiae (strain ATCC 204508 / S288c) (Baker's yeast).